The sequence spans 231 residues: Probable transglycosylase SceD (231 aa).

Residues 1–27 (MKKTLLASSLAVGLGIVAGNAGHEAHA) form the signal peptide. Residues 106 to 116 (AVQANQVQSQE) show a composition bias toward polar residues. Residues 106–153 (AVQANQVQSQEVEAPQNAQTQQPQASTSNNSQVTATPTESKSSEGSSV) are disordered. Low complexity predominate over residues 119–137 (APQNAQTQQPQASTSNNSQ). The segment covering 138–153 (VTATPTESKSSEGSSV) has biased composition (polar residues).

This sequence belongs to the transglycosylase family. SceD subfamily.

The protein localises to the secreted. Functionally, is able to cleave peptidoglycan and affects clumping and separation of bacterial cells. In Staphylococcus aureus (strain USA300), this protein is Probable transglycosylase SceD (sceD).